Reading from the N-terminus, the 266-residue chain is 3-methyl-2-oxobutanoate hydroxymethyltransferase (266 aa).

2 residues coordinate Mg(2+): D45 and D84. 3-methyl-2-oxobutanoate contacts are provided by residues 45 to 46 (DS), D84, and K113. Position 115 (E115) interacts with Mg(2+). Residue E183 is the Proton acceptor of the active site.

The protein belongs to the PanB family. Homodecamer; pentamer of dimers. Requires Mg(2+) as cofactor.

The protein resides in the cytoplasm. It carries out the reaction 3-methyl-2-oxobutanoate + (6R)-5,10-methylene-5,6,7,8-tetrahydrofolate + H2O = 2-dehydropantoate + (6S)-5,6,7,8-tetrahydrofolate. It functions in the pathway cofactor biosynthesis; (R)-pantothenate biosynthesis; (R)-pantoate from 3-methyl-2-oxobutanoate: step 1/2. Catalyzes the reversible reaction in which hydroxymethyl group from 5,10-methylenetetrahydrofolate is transferred onto alpha-ketoisovalerate to form ketopantoate. The chain is 3-methyl-2-oxobutanoate hydroxymethyltransferase from Coxiella burnetii (strain CbuK_Q154) (Coxiella burnetii (strain Q154)).